We begin with the raw amino-acid sequence, 282 residues long: 4-hydroxy-tetrahydrodipicolinate reductase (282 aa).

12–17 provides a ligand contact to NAD(+); sequence GVTGRM. An NADP(+)-binding site is contributed by R44. Residues 107 to 109 and 131 to 134 each bind NAD(+); these read GTT and SSNF. The active-site Proton donor/acceptor is H164. Residue H165 participates in (S)-2,3,4,5-tetrahydrodipicolinate binding. The Proton donor role is filled by K168. 174 to 175 is a (S)-2,3,4,5-tetrahydrodipicolinate binding site; that stretch reads GT.

This sequence belongs to the DapB family. As to quaternary structure, homotetramer.

The protein resides in the cytoplasm. The enzyme catalyses (S)-2,3,4,5-tetrahydrodipicolinate + NAD(+) + H2O = (2S,4S)-4-hydroxy-2,3,4,5-tetrahydrodipicolinate + NADH + H(+). It carries out the reaction (S)-2,3,4,5-tetrahydrodipicolinate + NADP(+) + H2O = (2S,4S)-4-hydroxy-2,3,4,5-tetrahydrodipicolinate + NADPH + H(+). Its pathway is amino-acid biosynthesis; L-lysine biosynthesis via DAP pathway; (S)-tetrahydrodipicolinate from L-aspartate: step 4/4. Catalyzes the conversion of 4-hydroxy-tetrahydrodipicolinate (HTPA) to tetrahydrodipicolinate. This is 4-hydroxy-tetrahydrodipicolinate reductase from Blochmanniella pennsylvanica (strain BPEN).